The sequence spans 364 residues: Mannonate dehydratase (364 aa).

This sequence belongs to the mannonate dehydratase family. Fe(2+) serves as cofactor. Requires Mn(2+) as cofactor.

The enzyme catalyses D-mannonate = 2-dehydro-3-deoxy-D-gluconate + H2O. It participates in carbohydrate metabolism; pentose and glucuronate interconversion. Functionally, catalyzes the dehydration of D-mannonate. This chain is Mannonate dehydratase, found in Endomicrobium trichonymphae.